The chain runs to 125 residues: Homeobox protein HD-8 (125 aa).

The segment at residues Glu30–Gly89 is a DNA-binding region (homeobox).

It localises to the nucleus. This is Homeobox protein HD-8 (HD-8) from Encephalitozoon cuniculi (strain GB-M1) (Microsporidian parasite).